Consider the following 625-residue polypeptide: DNA-directed RNA polymerase subunit gamma (625 aa).

4 residues coordinate Zn(2+): Cys71, Cys73, Cys86, and Cys89. Positions 467, 469, and 471 each coordinate Mg(2+).

It belongs to the RNA polymerase beta' chain family. RpoC1 subfamily. In cyanobacteria the RNAP catalytic core is composed of 2 alpha, 1 beta, 1 beta', 1 gamma and 1 omega subunit. When a sigma factor is associated with the core the holoenzyme is formed, which can initiate transcription. Requires Mg(2+) as cofactor. It depends on Zn(2+) as a cofactor.

The catalysed reaction is RNA(n) + a ribonucleoside 5'-triphosphate = RNA(n+1) + diphosphate. In terms of biological role, DNA-dependent RNA polymerase catalyzes the transcription of DNA into RNA using the four ribonucleoside triphosphates as substrates. In Trichormus variabilis (strain ATCC 29413 / PCC 7937) (Anabaena variabilis), this protein is DNA-directed RNA polymerase subunit gamma.